The following is a 283-amino-acid chain: Diaminopimelate epimerase (283 aa).

The substrate site is built by Asn13 and Asn66. Catalysis depends on Cys75, which acts as the Proton donor. Substrate-binding positions include 76–77 (GN), Asn165, Asn198, and 216–217 (ER). Cys225 functions as the Proton acceptor in the catalytic mechanism. Residue 226–227 (GT) coordinates substrate.

Belongs to the diaminopimelate epimerase family. As to quaternary structure, homodimer.

Its subcellular location is the cytoplasm. It catalyses the reaction (2S,6S)-2,6-diaminopimelate = meso-2,6-diaminopimelate. It functions in the pathway amino-acid biosynthesis; L-lysine biosynthesis via DAP pathway; DL-2,6-diaminopimelate from LL-2,6-diaminopimelate: step 1/1. Catalyzes the stereoinversion of LL-2,6-diaminopimelate (L,L-DAP) to meso-diaminopimelate (meso-DAP), a precursor of L-lysine and an essential component of the bacterial peptidoglycan. In Acaryochloris marina (strain MBIC 11017), this protein is Diaminopimelate epimerase.